The following is a 152-amino-acid chain: 3-dehydroquinate dehydratase (152 aa).

Tyr-23 functions as the Proton acceptor in the catalytic mechanism. Substrate contacts are provided by Asn-74, His-80, and Asp-87. The active-site Proton donor is His-100. Residues 101–102 (LS) and Arg-111 each bind substrate.

This sequence belongs to the type-II 3-dehydroquinase family. In terms of assembly, homododecamer.

It carries out the reaction 3-dehydroquinate = 3-dehydroshikimate + H2O. It participates in metabolic intermediate biosynthesis; chorismate biosynthesis; chorismate from D-erythrose 4-phosphate and phosphoenolpyruvate: step 3/7. Catalyzes a trans-dehydration via an enolate intermediate. The protein is 3-dehydroquinate dehydratase of Clostridium botulinum (strain Langeland / NCTC 10281 / Type F).